The sequence spans 293 residues: Protein translocase subunit SecF (293 aa).

Transmembrane regions (helical) follow at residues 10–30, 130–150, 158–178, 185–205, 244–264, and 267–287; these read ARIFFSITAVVLIVGIVSMFA, VKSAVGAVVLSWVLMIIYITI, LAAIVALIIDVMVTLTWFSVL, SFVAALLTVVGYSVNGTIVVF, LFAVVAIFLFGGETIHNFSFA, and VGFCSGFYTSTFLAGSMWLFF.

The protein belongs to the SecD/SecF family. SecF subfamily. In terms of assembly, forms a complex with SecD. Part of the essential Sec protein translocation apparatus which comprises SecA, SecYEG and auxiliary proteins SecDF. Other proteins may also be involved.

The protein localises to the cell membrane. Its function is as follows. Part of the Sec protein translocase complex. Interacts with the SecYEG preprotein conducting channel. SecDF uses the proton motive force (PMF) to complete protein translocation after the ATP-dependent function of SecA. In Acidaminococcus fermentans (strain ATCC 25085 / DSM 20731 / CCUG 9996 / CIP 106432 / VR4), this protein is Protein translocase subunit SecF.